Consider the following 276-residue polypeptide: MQNDPIGLMDSGVGGLTVLKEVQRLLPTENTVFLGDQARLPYGPRSVAEVTMFTKQIAQFLRQQAGIKALVIACNTATAAALTTMQQTLPIPVIGVIAPGAQAAVQTTRNHRIGVIATAGTVKSDQYRRDILAAAPNSQIFSVACPEMVTLAEQNDLTTTHARSVVAANLASLMDKKIDTLVMGCTHFPLLRSAIQHAVGSQVTLVDPGLATAEQTAAILKTHGLLNPATTRGTAQFFTTGETAHFDTLASQWLDQQPMPAKHVSIAQLTTPMEVN.

Residues 10-11 (DS) and 42-43 (YG) contribute to the substrate site. Residue C74 is the Proton donor/acceptor of the active site. A substrate-binding site is contributed by 75–76 (NT). The active-site Proton donor/acceptor is the C185. 186–187 (TH) lines the substrate pocket.

This sequence belongs to the aspartate/glutamate racemases family.

The catalysed reaction is L-glutamate = D-glutamate. The protein operates within cell wall biogenesis; peptidoglycan biosynthesis. Its function is as follows. Provides the (R)-glutamate required for cell wall biosynthesis. This chain is Glutamate racemase, found in Levilactobacillus brevis (strain ATCC 367 / BCRC 12310 / CIP 105137 / JCM 1170 / LMG 11437 / NCIMB 947 / NCTC 947) (Lactobacillus brevis).